Reading from the N-terminus, the 434-residue chain is Putative neutral sphingomyelinase (434 aa).

E83 is a Mg(2+) binding site. The Proton acceptor role is filled by H318. 2 helical membrane-spanning segments follow: residues 366 to 388 (IFFF…FEVF) and 392 to 414 (FAVL…LIGL).

Belongs to the neutral sphingomyelinase family.

Its subcellular location is the membrane. It carries out the reaction an N-(acyl)-sphingosylphosphocholine + H2O = an N-acyl-sphingoid base + phosphocholine + H(+). The catalysed reaction is a sphingomyelin + H2O = phosphocholine + an N-acylsphing-4-enine + H(+). The enzyme catalyses an N-acyl-15-methylhexadecasphing-4-enine-1-phosphocholine + H2O = an N-acyl-15-methylhexadecasphing-4-enine + phosphocholine + H(+). It participates in lipid metabolism; sphingolipid metabolism. Catalyzes the hydrolysis of sphingomyelin producing a ceramide (N-acyl-sphingoid base) and a phosphocholine. C.elegans contain specific sphingoid bases, which are unique or different in structure compared to the sphingoid bases found in other animals. Two examples of these distinctive compounds are: 15-methylhexadecasphinganine and 15-methylhexadecasphing-4-enine. This Caenorhabditis elegans protein is Putative neutral sphingomyelinase.